The primary structure comprises 158 residues: Probable host range protein 2-1 (158 aa).

It belongs to the poxviridae C7 protein family.

Functionally, plays a role for multiplication of the virus in different cell types. The protein is Probable host range protein 2-1 of Oryctolagus cuniculus (Rabbit).